The chain runs to 865 residues: Protein translocase subunit SecA (865 aa).

Residues Gln-93, 111-115 (GEGKT), and Asp-501 each bind ATP. Residues Cys-841, Cys-843, Cys-852, and Cys-853 each coordinate Zn(2+).

This sequence belongs to the SecA family. In terms of assembly, monomer and homodimer. Part of the essential Sec protein translocation apparatus which comprises SecA, SecYEG and auxiliary proteins SecDF-YajC and YidC. Zn(2+) serves as cofactor.

It is found in the cell inner membrane. The protein localises to the cytoplasm. It catalyses the reaction ATP + H2O + cellular proteinSide 1 = ADP + phosphate + cellular proteinSide 2.. Its function is as follows. Part of the Sec protein translocase complex. Interacts with the SecYEG preprotein conducting channel. Has a central role in coupling the hydrolysis of ATP to the transfer of proteins into and across the cell membrane, serving as an ATP-driven molecular motor driving the stepwise translocation of polypeptide chains across the membrane. This is Protein translocase subunit SecA from Helicobacter pylori (strain HPAG1).